A 90-amino-acid polypeptide reads, in one-letter code: MNKAQLVDAIAAKADLSKAQAKVALEEIINGITQSLKEGDAVQLVGFGTFKVNHRAGRTGRNPQTGKEIQIAAANVPSFVAGKALKDAVK.

Belongs to the bacterial histone-like protein family. Heterodimer of an alpha and a beta chain.

In terms of biological role, histone-like DNA-binding protein which is capable of wrapping DNA to stabilize it, and thus to prevent its denaturation under extreme environmental conditions. The chain is DNA-binding protein HU-alpha (hupA) from Aeromonas hydrophila.